We begin with the raw amino-acid sequence, 229 residues long: Cytidylate kinase (229 aa).

An ATP-binding site is contributed by G7–S15.

The protein belongs to the cytidylate kinase family. Type 1 subfamily.

Its subcellular location is the cytoplasm. The catalysed reaction is CMP + ATP = CDP + ADP. It catalyses the reaction dCMP + ATP = dCDP + ADP. The sequence is that of Cytidylate kinase from Rhodopirellula baltica (strain DSM 10527 / NCIMB 13988 / SH1).